The following is a 920-amino-acid chain: Rho GTPase-activating protein REN1 (920 aa).

A compositionally biased stretch (polar residues) spans 1–10; sequence MANKNAESSS. A disordered region spans residues 1 to 64; it reads MANKNAESSS…SRGGNTVFKS (64 aa). Residues 17–31 show a composition bias toward low complexity; sequence QPNQQQQQQPPIANE. The segment covering 45–64 has biased composition (polar residues); that stretch reads PAQSGNTDSRSRGGNTVFKS. Residues 60–167 enclose the PH domain; that stretch reads TVFKSGPLSI…WKAALENALT (108 aa). A Rho-GAP domain is found at 213–412; it reads LALEDVDGAP…TLLEEYESIF (200 aa). Disordered stretches follow at residues 417–592, 719–825, and 837–920; these read LSPG…NLSM, RLGH…ALSK, and RSQI…TFSR. A compositionally biased stretch (acidic residues) spans 434–463; sequence EGSDDEEYDDDDDGSQGSEDYTDEEEDLEN. The segment covering 464 to 473 has biased composition (polar residues); the sequence is ESNGSYSESA. 3 stretches are compositionally biased toward basic and acidic residues: residues 475–491, 499–509, and 520–532; these read SEDK…HKIN, KSPKRSKEPKK, and PRHD…EDIV. Polar residues predominate over residues 555–568; sequence SSTSDVASDTQKPS. Residues 577-586 are compositionally biased toward basic residues; sequence SKRHWGRTPG. The stretch at 598–728 forms a coiled coil; it reads SVEVDEDNAD…RLGHHDGKAS (131 aa). 2 stretches are compositionally biased toward basic and acidic residues: residues 734 to 768 and 776 to 788; these read ASKE…RSTS and RENE…DSRS. Residues 814-825 show a composition bias toward low complexity; that stretch reads EGSTTTTSALSK. 2 stretches are compositionally biased toward polar residues: residues 854-864 and 872-885; these read GQPSPTSGQNR and GSGS…SKLQ. Over residues 889–903 the composition is skewed to basic and acidic residues; sequence ILDRGRSENGGDRGR. Positions 910–920 are enriched in polar residues; it reads HPNTTPRTFSR.

Interacts with ARAC11/ROP1. In terms of tissue distribution, expressed in pollen and pollen tubes.

The protein localises to the cell membrane. Acts as a GTPase activator for the Rac-type GTPase by converting it to an inactive GDP-bound state. Maintains the global inactivation of ARAC11/ROP1 at the apex in pollen tubes in order to regulate the polar cell growth. This Arabidopsis thaliana (Mouse-ear cress) protein is Rho GTPase-activating protein REN1 (REN1).